The chain runs to 349 residues: MIEFDNLTYLHGKPQGTGLLKANPEDFVVVEDLGFEPDGEGEHILVRILKNGCNTRFVADALAKFLKIHAREVSFAGQKDKHAVTEQWLCARVPGKEIPDLSAFQLEGCQVLEYARHKRKLRLGALKGNAFTLVLREVSNRDDVEQRLIDICVKGVPNYFGAQRFGIGGSNLQGALRWAQTNTPVRDRNKRSFWLSAARSALFNQIVAERLKKADVNQVVDGDALQLAGRGSWFVATTEELAELQRRVNDKELMITAALPGSGEWGTQREALAFEQAAVAAETELQALLVREKVEAARRAMLLYPQQLSWNWWDDVTVEIRFWLPAGSFATSVVRELINTTGDYAHIAE.

A substrate-binding site is contributed by F27. The Nucleophile role is filled by D80. N129 lines the substrate pocket. A TRUD domain is found at 155–303; the sequence is GVPNYFGAQR…VEAARRAMLL (149 aa). Position 329 (F329) interacts with substrate.

This sequence belongs to the pseudouridine synthase TruD family.

It carries out the reaction uridine(13) in tRNA = pseudouridine(13) in tRNA. Its function is as follows. Responsible for synthesis of pseudouridine from uracil-13 in transfer RNAs. The sequence is that of tRNA pseudouridine synthase D from Escherichia coli O7:K1 (strain IAI39 / ExPEC).